We begin with the raw amino-acid sequence, 869 residues long: Synaptonemal complex protein ZEP1 (869 aa).

Coiled coils occupy residues 64 to 298 (TDLE…SGFT), 330 to 614 (HEEK…SERY), and 641 to 713 (RAYH…WKVM). The segment at 841 to 869 (GSHPHPANIGELFSEGSLNPYAEDPYAFG) is disordered.

Interacts with CRC1. In terms of tissue distribution, highly expressed in panicles.

The protein localises to the nucleus. Its subcellular location is the chromosome. Required for chromosome synapsis and regulates crossover frequency during meiosis. Acts as a transverse filament protein and constitutes the central element of the synaptonemal complex. This Oryza sativa subsp. japonica (Rice) protein is Synaptonemal complex protein ZEP1 (ZEP1).